A 1542-amino-acid polypeptide reads, in one-letter code: ABC multidrug transporter AFR1 (1542 aa).

2 disordered regions span residues 1–84 and 118–141; these read MSAA…LPAD and SQQSQHELHRPTTRHSIRSSFSRK. The span at 18–41 shows a compositional bias: polar residues; the sequence is TATTQNPSGLANSQVTSDPVPSAT. The segment covering 60–69 has biased composition (basic and acidic residues); the sequence is DKSVDAEKVE. Residues Asn-207 and Asn-397 are each glycosylated (N-linked (GlcNAc...) asparagine). The 253-residue stretch at 221-473 folds into the ABC transporter 1 domain; the sequence is LKVLGIFGVN…MIGLGYRDLP (253 aa). Helical transmembrane passes span 584 to 604, 618 to 638, 669 to 689, 694 to 714, and 726 to 746; these read FGISTGYATSIIIALIVGSVY, GGLLFLGLLFNALTSFSELPS, VPYNASVIFLFSIVLYFMGGL, GAFFIFYLFVFLTFMVMSAFF, and VAARLASVLISFMVTYTGYMI. N-linked (GlcNAc...) asparagine glycosylation occurs at Asn-822. Residues 844–864 form a helical membrane-spanning segment; that stretch reads FGILVGFFAFFMFLQMMFIEY. The ABC transporter 2 domain maps to 917-1159; that stretch reads FTWEGLNYTV…VLIDYLERNG (243 aa). A glycan (N-linked (GlcNAc...) asparagine) is linked at Asn-923. Position 953–960 (953–960) interacts with ATP; it reads GASGAGKT. 6 consecutive transmembrane segments (helical) span residues 1253–1273, 1284–1304, 1335–1355, 1365–1385, 1390–1410, and 1516–1536; these read WTRLFAHLAIGLIVTLTFLQL, VFAIFFATVLPALILAQIEPQ, MPYSLGCAVSFFLLLYYGVGF, FFLMILVTEIYAVTLGQAVAA, ILIAALFNPFLLVLFSIFCGV, and FGIFICYVVFNILVLLIAARF.

It belongs to the ABC transporter superfamily. ABCG family. PDR (TC 3.A.1.205) subfamily.

The protein localises to the cell membrane. The enzyme catalyses itraconazole(in) + ATP + H2O = itraconazole(out) + ADP + phosphate + H(+). It carries out the reaction voriconazole(in) + ATP + H2O = voriconazole(out) + ADP + phosphate + H(+). The catalysed reaction is fluconazole(in) + ATP + H2O = fluconazole(out) + ADP + phosphate + H(+). Its function is as follows. Major pleiotropic ABC efflux transporter that confers resistance to structurally and functionally unrelated compounds including azoles such as fluconazole (FLC), itraconazole (ITC), posaconazole (POS), and voriconazole (VRC). Is also able to efflux the eukaryote protein synthesis inhibitor cycloheximide (CHX). This chain is ABC multidrug transporter AFR1, found in Cryptococcus deuterogattii (strain R265) (Cryptococcus gattii VGII (strain R265)).